We begin with the raw amino-acid sequence, 220 residues long: Elongation factor Ts, chloroplastic (220 aa).

The protein belongs to the EF-Ts family.

Its subcellular location is the plastid. It is found in the chloroplast. Functionally, associates with the EF-Tu.GDP complex and induces the exchange of GDP to GTP. It remains bound to the aminoacyl-tRNA.EF-Tu.GTP complex up to the GTP hydrolysis stage on the ribosome. This Porphyra purpurea (Red seaweed) protein is Elongation factor Ts, chloroplastic (tsf).